A 1429-amino-acid polypeptide reads, in one-letter code: Autophagy-related protein 11 (1429 aa).

4 coiled-coil regions span residues 540–579, 616–808, 842–985, and 1106–1135; these read GDDDLLQSLQEDKGKLENKLKTAESRVRRLEDLLHRQSQA, EGID…LDDH, TLVE…HMNS, and RRIKEVEHMARKWQKEARSYRERAHILQKD. The interval 574-622 is disordered; sequence HRQSQASRPGNLFQPQGSQQRERVNSASSVRSSRFDDRRRSSEGIDPLM. Residues 575–592 show a composition bias toward polar residues; it reads RQSQASRPGNLFQPQGSQ. Over residues 606-616 the composition is skewed to basic and acidic residues; the sequence is SRFDDRRRSSE. Disordered regions lie at residues 1205-1224 and 1333-1405; these read SKSLQPSSETESINDEENDN and RAHN…PTRR. 2 stretches are compositionally biased toward polar residues: residues 1206–1215 and 1333–1362; these read KSLQPSSETE and RAHNADTPSGTSPTQGGHLTSTNASLGQKN. Residues 1384–1398 show a composition bias toward basic and acidic residues; that stretch reads KADEQPRSVVQREDS.

The protein belongs to the ATG11 family. As to quaternary structure, homodimer and potential homooligomers. Interacts with ATG1 kinase and the ATG19 and ATG34 cargo protein transporters. Interacts with ATG9, ATG17 and ATG20.

It is found in the preautophagosomal structure membrane. Its subcellular location is the vacuole membrane. In terms of biological role, involved in cytoplasm to vacuole transport (Cvt), pexophagy, mitophagy and nucleophagy. Recruits mitochondria for their selective degradation via autophagy (mitophagy) during starvation, through its interaction with ATG32. Works as scaffold proteins that recruit ATG proteins to the pre-autophagosome (PAS), the site of vesicle/autophagosome formation. Required for ATG9 anterograde transport from the mitochondria to the PAS. Also recruits the ATG19-prAPE1 complex to the PAS. Required for the Cvt vesicles completion. Autophagy is required for proper vegetative growth, asexual/sexual reproduction, and full virulence. Autophagy is particularly involved in the biosynthesis of deoxynivalenol (DON), an important virulence determinant. This Gibberella zeae (strain ATCC MYA-4620 / CBS 123657 / FGSC 9075 / NRRL 31084 / PH-1) (Wheat head blight fungus) protein is Autophagy-related protein 11.